The chain runs to 338 residues: D-erythrose-4-phosphate dehydrogenase (338 aa).

11-12 (RI) contacts NAD(+). Residues 153 to 155 (SCT), R199, 212 to 213 (TK), and R235 contribute to the substrate site. The Nucleophile role is filled by C154. Position 317 (N317) interacts with NAD(+).

The protein belongs to the glyceraldehyde-3-phosphate dehydrogenase family. Epd subfamily. In terms of assembly, homotetramer.

Its subcellular location is the cytoplasm. It carries out the reaction D-erythrose 4-phosphate + NAD(+) + H2O = 4-phospho-D-erythronate + NADH + 2 H(+). It functions in the pathway cofactor biosynthesis; pyridoxine 5'-phosphate biosynthesis; pyridoxine 5'-phosphate from D-erythrose 4-phosphate: step 1/5. Catalyzes the NAD-dependent conversion of D-erythrose 4-phosphate to 4-phosphoerythronate. The sequence is that of D-erythrose-4-phosphate dehydrogenase from Shewanella oneidensis (strain ATCC 700550 / JCM 31522 / CIP 106686 / LMG 19005 / NCIMB 14063 / MR-1).